A 698-amino-acid polypeptide reads, in one-letter code: Elongation factor G 1 (698 aa).

A tr-type G domain is found at 8–290 (ERYRNIGIVA…AVVDYLPAPI (283 aa)). GTP-binding positions include 17 to 24 (AHVDAGKT), 88 to 92 (DTPGH), and 142 to 145 (NKMD).

Belongs to the TRAFAC class translation factor GTPase superfamily. Classic translation factor GTPase family. EF-G/EF-2 subfamily.

The protein localises to the cytoplasm. Functionally, catalyzes the GTP-dependent ribosomal translocation step during translation elongation. During this step, the ribosome changes from the pre-translocational (PRE) to the post-translocational (POST) state as the newly formed A-site-bound peptidyl-tRNA and P-site-bound deacylated tRNA move to the P and E sites, respectively. Catalyzes the coordinated movement of the two tRNA molecules, the mRNA and conformational changes in the ribosome. The chain is Elongation factor G 1 from Shewanella denitrificans (strain OS217 / ATCC BAA-1090 / DSM 15013).